Consider the following 344-residue polypeptide: MSNAITMGIFWHLIGAASAACFYAPFKKVKKWSWETMWSVGGIVSWIILPWAISALLLPNFWAYYSSFSLSTLLPVFLFGAMWGIGNINYGLTMRYLGMSMGIGIAIGITLIVGTLMTPIINGNFDVLINTEGGRMTLLGVLVALIGVGIVTRAGQLKERKMGIKAEEFNLKKGLVLAVMCGIFSAGMSFAMNAAKPMHEAAAALGVDPLYVALPSYVIIMGGGAIINLGFCFIRLAKVKDLSLKADFSLAKPLITHNVLLSALGGLMWYLQFFFYAWGHARIPAQYDYISWMLHMSFYVLCGGIVGLVLKEWNNAGRRPVTVLSLGCVVIIVAANIVGIGMAN.

Helical transmembrane passes span Ala4–Ala24, Trp38–Leu58, Phe68–Ile88, Met101–Ile121, Thr137–Leu157, Leu175–Ala195, Leu214–Ile234, Val259–Gly279, Ile290–Leu310, and Val323–Ala343.

The protein belongs to the L-rhamnose transporter (TC 2.A.7.6) family.

The protein localises to the cell inner membrane. It catalyses the reaction L-rhamnopyranose(in) + H(+)(in) = L-rhamnopyranose(out) + H(+)(out). Its function is as follows. Uptake of L-rhamnose across the cytoplasmic membrane with the concomitant transport of protons into the cell (symport system). The protein is L-rhamnose-proton symporter of Escherichia coli (strain 55989 / EAEC).